A 375-amino-acid chain; its full sequence is Tyrosine--tRNA ligase (375 aa).

Residues Y37, Y168, Q172, D175, and Q190 each contribute to the L-tyrosine site. A 'KMSKS' region motif is present at residues 251–255 (KMSKS). K254 lines the ATP pocket.

The protein belongs to the class-I aminoacyl-tRNA synthetase family. TyrS type 4 subfamily. As to quaternary structure, homodimer.

It localises to the cytoplasm. It catalyses the reaction tRNA(Tyr) + L-tyrosine + ATP = L-tyrosyl-tRNA(Tyr) + AMP + diphosphate + H(+). In terms of biological role, catalyzes the attachment of tyrosine to tRNA(Tyr) in a two-step reaction: tyrosine is first activated by ATP to form Tyr-AMP and then transferred to the acceptor end of tRNA(Tyr). In Thermococcus kodakarensis (strain ATCC BAA-918 / JCM 12380 / KOD1) (Pyrococcus kodakaraensis (strain KOD1)), this protein is Tyrosine--tRNA ligase.